The sequence spans 284 residues: D-tagatose-1,6-bisphosphate aldolase subunit GatY (284 aa).

The active-site Proton donor is the D82. Zn(2+)-binding residues include H83 and H180. A dihydroxyacetone phosphate-binding site is contributed by G181. H208 lines the Zn(2+) pocket. Residues 209-211 (GAS) and 230-233 (NVAT) each bind dihydroxyacetone phosphate.

It belongs to the class II fructose-bisphosphate aldolase family. TagBP aldolase GatY subfamily. Forms a complex with GatZ. The cofactor is Zn(2+).

It carries out the reaction D-tagatofuranose 1,6-bisphosphate = D-glyceraldehyde 3-phosphate + dihydroxyacetone phosphate. Its pathway is carbohydrate metabolism; D-tagatose 6-phosphate degradation; D-glyceraldehyde 3-phosphate and glycerone phosphate from D-tagatose 6-phosphate: step 2/2. Catalytic subunit of the tagatose-1,6-bisphosphate aldolase GatYZ, which catalyzes the reversible aldol condensation of dihydroxyacetone phosphate (DHAP or glycerone-phosphate) with glyceraldehyde 3-phosphate (G3P) to produce tagatose 1,6-bisphosphate (TBP). Requires GatZ subunit for full activity and stability. Is involved in the catabolism of galactitol. This chain is D-tagatose-1,6-bisphosphate aldolase subunit GatY, found in Salmonella paratyphi B (strain ATCC BAA-1250 / SPB7).